Reading from the N-terminus, the 1099-residue chain is Solute carrier family 12 member 1 (1099 aa).

Over 1-177 (MSLNNSSSVF…EDNKAGAVKF (177 aa)) the chain is Cytoplasmic. Positions 20-23 (RFQV) match the RFXV motif motif. A phosphoserine mark is found at Ser-60 and Ser-90. Phosphothreonine is present on residues Thr-94, Thr-99, Thr-104, and Thr-117. A Phosphoserine modification is found at Ser-119. Ser-129 is modified (phosphoserine; by AMPK). Ser-147 is subject to Phosphoserine. A disordered region spans residues 147–169 (SADRVANGEGMPGEEHAENKEED). Positions 159–169 (GEEHAENKEED) are enriched in basic and acidic residues. Residues 178–198 (GWVKGVLVRCMLNIWGVMLFI) traverse the membrane as a helical segment. The Extracellular segment spans residues 199–201 (RLS). Residues 202-222 (WIVGEAGIGLGVVIILLSTMV) form a helical membrane-spanning segment. Over 223 to 259 (TSITGLSTSAIATNGFVRGGGAYYLISRSLGPEFGGS) the chain is Cytoplasmic. Residues 260–280 (IGLIFAFANAVAVAMYVVGFA) form a helical membrane-spanning segment. Residues 281–302 (ETVVDLLKESDSMMVDPTNDIR) are Extracellular-facing. Residues 303 to 323 (IIGSITVVILLGISVAGMEWE) traverse the membrane as a helical segment. Topologically, residues 324 to 327 (AKAQ) are cytoplasmic. The chain crosses the membrane as a helical span at residues 328 to 348 (VILLIILLIAIANFFIGTVIP). At 349-379 (SNNEKKSRGFFNYQASIFAENFGPSFTKGEG) the chain is on the extracellular side. Residues 380-400 (FFSVFAIFFPAATGILAGANI) traverse the membrane as a helical segment. Over 401–417 (SGDLEDPQDAIPRGTML) the chain is Cytoplasmic. Residues 418–438 (AIFITTVAYIGVAICVGACVV) traverse the membrane as a helical segment. Topologically, residues 439-550 (RDATGSMNDT…NNEPLRGYIL (112 aa)) are extracellular. Residues Asn-446 and Asn-456 are each glycosylated (N-linked (GlcNAc...) asparagine). 2 helical membrane passes run 551 to 571 (TFVIAMAFILIAELNTIAPII) and 572 to 592 (SNFFLASYALINFSCFHASYA). Topologically, residues 593 to 609 (KSPGWRPAYGIYNMWVS) are extracellular. The chain crosses the membrane as a helical span at residues 610-630 (LFGAVLCCAVMFVINWWAAVI). The Cytoplasmic portion of the chain corresponds to 631 to 1099 (TYVIEFFLYI…NHKNVLTFYS (469 aa)).

Belongs to the SLC12A transporter family. When phosphorylated, interacts with PPP3CB. Post-translationally, phosphorylated at Ser-90, Thr-99 and Thr-104 by OXSR1/OSR1 and STK39/SPAK downstream of WNK kinases (WNK1, WNK2, WNK3 or WNK4), promoting its activity. Predominant in kidney. The 3 isoforms are differentially distributed within the kidney: B almost exclusively in cortex, F almost exclusively in medulla, and A about equally distributed.

The protein resides in the apical cell membrane. The enzyme catalyses K(+)(out) + 2 chloride(out) + Na(+)(out) = K(+)(in) + 2 chloride(in) + Na(+)(in). Its activity is regulated as follows. Activated following phosphorylation by OXSR1/OSR1 and STK39/SPAK downstream of WNK kinases (WNK1, WNK2, WNK3 or WNK4). Functionally, renal sodium, potassium and chloride ion cotransporter that mediates the transepithelial NaCl reabsorption in the thick ascending limb and plays an essential role in the urinary concentration and volume regulation. Electrically silent transporter system. The chain is Solute carrier family 12 member 1 (SLC12A1) from Oryctolagus cuniculus (Rabbit).